Consider the following 175-residue polypeptide: Methylated-DNA--protein-cysteine methyltransferase (175 aa).

The DNA site is built by Tyr-115 and Arg-127. The Nucleophile; methyl group acceptor role is filled by Cys-144.

It belongs to the MGMT family.

It localises to the nucleus. It carries out the reaction a 6-O-methyl-2'-deoxyguanosine in DNA + L-cysteinyl-[protein] = S-methyl-L-cysteinyl-[protein] + a 2'-deoxyguanosine in DNA. The catalysed reaction is a 4-O-methyl-thymidine in DNA + L-cysteinyl-[protein] = a thymidine in DNA + S-methyl-L-cysteinyl-[protein]. Involved in the cellular defense against the biological effects of O6-methylguanine (O6-MeG) and O4-methylthymine (O4-MeT) in DNA. Repairs the methylated nucleobase in DNA by stoichiometrically transferring the methyl group to a cysteine residue in the enzyme. This is a suicide reaction: the enzyme is irreversibly inactivated. This is Methylated-DNA--protein-cysteine methyltransferase (MGT1) from Candida albicans (strain SC5314 / ATCC MYA-2876) (Yeast).